The following is an 85-amino-acid chain: Large ribosomal subunit protein bL27 (85 aa).

This sequence belongs to the bacterial ribosomal protein bL27 family.

In Leptospira biflexa serovar Patoc (strain Patoc 1 / Ames), this protein is Large ribosomal subunit protein bL27.